The primary structure comprises 255 residues: Hydroxyacylglutathione hydrolase (255 aa).

H53, H55, D57, H58, H110, D127, and H165 together coordinate Zn(2+).

It belongs to the metallo-beta-lactamase superfamily. Glyoxalase II family. Monomer. Zn(2+) is required as a cofactor.

The catalysed reaction is an S-(2-hydroxyacyl)glutathione + H2O = a 2-hydroxy carboxylate + glutathione + H(+). It participates in secondary metabolite metabolism; methylglyoxal degradation; (R)-lactate from methylglyoxal: step 2/2. Functionally, thiolesterase that catalyzes the hydrolysis of S-D-lactoyl-glutathione to form glutathione and D-lactic acid. This Xanthomonas euvesicatoria pv. vesicatoria (strain 85-10) (Xanthomonas campestris pv. vesicatoria) protein is Hydroxyacylglutathione hydrolase.